A 781-amino-acid chain; its full sequence is Probable beta-D-xylosidase 5 (781 aa).

The signal sequence occupies residues 1 to 23; it reads MSIRRFVRLSLLIIALVSSLCES. 3 N-linked (GlcNAc...) asparagine glycosylation sites follow: Asn-43, Asn-103, and Asn-123. Residue Asp-291 is part of the active site. N-linked (GlcNAc...) asparagine glycans are attached at residues Asn-342, Asn-424, Asn-504, Asn-543, Asn-601, and Asn-653.

Belongs to the glycosyl hydrolase 3 family.

The protein resides in the secreted. It is found in the extracellular space. The protein localises to the extracellular matrix. The sequence is that of Probable beta-D-xylosidase 5 (BXL5) from Arabidopsis thaliana (Mouse-ear cress).